The sequence spans 78 residues: MASLIQVRDLLALRGRMEAAQISQTLNTPQPMINAMLQQLESMGKAVRIQEEPDGCLSGSCKSCPEGKACLREWWALR.

C56, C61, C64, and C70 together coordinate iron-sulfur cluster.

The protein belongs to the FeoC family.

May function as a transcriptional regulator that controls feoABC expression. The sequence is that of Probable [Fe-S]-dependent transcriptional repressor from Escherichia fergusonii (strain ATCC 35469 / DSM 13698 / CCUG 18766 / IAM 14443 / JCM 21226 / LMG 7866 / NBRC 102419 / NCTC 12128 / CDC 0568-73).